The chain runs to 368 residues: tRNA(Met) cytidine acetate ligase (368 aa).

ATP is bound by residues 7-20 (IAEF…HKYL), Gly-96, Asn-152, and Arg-175.

Belongs to the TmcAL family.

The protein resides in the cytoplasm. The enzyme catalyses cytidine(34) in elongator tRNA(Met) + acetate + ATP = N(4)-acetylcytidine(34) in elongator tRNA(Met) + AMP + diphosphate. Functionally, catalyzes the formation of N(4)-acetylcytidine (ac(4)C) at the wobble position of elongator tRNA(Met), using acetate and ATP as substrates. First activates an acetate ion to form acetyladenylate (Ac-AMP) and then transfers the acetyl group to tRNA to form ac(4)C34. The sequence is that of tRNA(Met) cytidine acetate ligase from Streptococcus pyogenes serotype M3 (strain SSI-1).